Reading from the N-terminus, the 696-residue chain is Glycine--tRNA ligase beta subunit (696 aa).

Belongs to the class-II aminoacyl-tRNA synthetase family. As to quaternary structure, tetramer of two alpha and two beta subunits.

The protein localises to the cytoplasm. The catalysed reaction is tRNA(Gly) + glycine + ATP = glycyl-tRNA(Gly) + AMP + diphosphate. This Aromatoleum aromaticum (strain DSM 19018 / LMG 30748 / EbN1) (Azoarcus sp. (strain EbN1)) protein is Glycine--tRNA ligase beta subunit.